A 155-amino-acid polypeptide reads, in one-letter code: Small ribosomal subunit protein uS7cz/uS7cy (155 aa).

This sequence belongs to the universal ribosomal protein uS7 family. In terms of assembly, part of the 30S ribosomal subunit.

Its subcellular location is the plastid. The protein resides in the chloroplast. In terms of biological role, one of the primary rRNA binding proteins, it binds directly to 16S rRNA where it nucleates assembly of the head domain of the 30S subunit. The protein is Small ribosomal subunit protein uS7cz/uS7cy (rps7-A) of Anthoceros angustus (Hornwort).